The sequence spans 458 residues: Sulfite efflux pump SSU1 (458 aa).

At 1 to 11 the chain is on the cytoplasmic side; that stretch reads MVANWVLALTR. A helical membrane pass occupies residues 12–32; sequence QFDPFMFMMVMGVGISSNILY. The Extracellular segment spans residues 33–48; it reads SFPYPARWLRICSYIM. Residues 49 to 69 traverse the membrane as a helical segment; that stretch reads FAIACLIFIAVQALQILHLIV. At 70 to 89 the chain is on the cytoplasmic side; sequence YIKEKSFREYFNDFFRNMKH. The chain crosses the membrane as a helical span at residues 90–110; that stretch reads NLFWGTYPMGLVTIINFLGAL. Residues 111–135 lie on the Extracellular side of the membrane; it reads SKANTTKSPTNARNLMIFVYVLWWY. A helical transmembrane segment spans residues 136 to 156; the sequence is DLAVCLVIAWGISFLIWHDYY. Over 157–176 the chain is Cytoplasmic; that stretch reads PLEGIGNYPSYNIKMASENM. The helical transmembrane segment at 177-197 threads the bilayer; the sequence is KSVLLLDIIPLVVVASSCGTF. Over 198-220 the chain is Extracellular; sequence TMSEIFFHAFNRNIQLITLVICA. Residues 221–241 traverse the membrane as a helical segment; that stretch reads LTWLHAIIFVFILIAIYFWSL. The Cytoplasmic portion of the chain corresponds to 242 to 252; it reads YINKIPPMTQV. The helical transmembrane segment at 253–275 threads the bilayer; the sequence is FTLFLLLGPMGQGSFGVLLLTDN. Residues 276 to 309 lie on the Extracellular side of the membrane; that stretch reads IKKYAGKYYPTDNITREQEILTIAVPWCFKILGM. A helical transmembrane segment spans residues 310–330; the sequence is VSAMALLAMGYFFTVISVVSI. The Cytoplasmic segment spans residues 331-350; the sequence is LSYYNKKEIENETGKVKRVY. A helical transmembrane segment spans residues 351–371; the sequence is TFHKGFWGMTFPMGTMSLGNE. Topologically, residues 372 to 387 are extracellular; sequence ELYVQYNQYVPLYAFR. A helical transmembrane segment spans residues 388–408; it reads VLGTIYGGVCVCWSILCLLCT. Residues 409-458 are Cytoplasmic-facing; it reads LHEYSKKMLHAARKSSLFSESGTEKTTVSPYNSIESVEESNSALDFTRLA. A phosphoserine mark is found at Ser444, Ser448, and Ser450.

It belongs to the tellurite-resistance/dicarboxylate transporter (TDT) family.

Its subcellular location is the cell membrane. In terms of biological role, involved in efflux of free sulfite. Mutations in the SSU1 gene cause sensitivity to sulfite. This is Sulfite efflux pump SSU1 (SSU1) from Saccharomyces cerevisiae (strain ATCC 204508 / S288c) (Baker's yeast).